Reading from the N-terminus, the 149-residue chain is Small ribosomal subunit protein bS18c (149 aa).

Positions 1–23 are disordered; sequence MDKITGPFRKSKKSFRKPLPPIQ.

It belongs to the bacterial ribosomal protein bS18 family. Part of the 30S ribosomal subunit.

Its subcellular location is the plastid. This chain is Small ribosomal subunit protein bS18c, found in Cuscuta obtusiflora (Peruvian dodder).